The following is a 236-amino-acid chain: Leucyl/phenylalanyl-tRNA--protein transferase (236 aa).

The protein belongs to the L/F-transferase family.

The protein resides in the cytoplasm. The catalysed reaction is N-terminal L-lysyl-[protein] + L-leucyl-tRNA(Leu) = N-terminal L-leucyl-L-lysyl-[protein] + tRNA(Leu) + H(+). It carries out the reaction N-terminal L-arginyl-[protein] + L-leucyl-tRNA(Leu) = N-terminal L-leucyl-L-arginyl-[protein] + tRNA(Leu) + H(+). The enzyme catalyses L-phenylalanyl-tRNA(Phe) + an N-terminal L-alpha-aminoacyl-[protein] = an N-terminal L-phenylalanyl-L-alpha-aminoacyl-[protein] + tRNA(Phe). Its function is as follows. Functions in the N-end rule pathway of protein degradation where it conjugates Leu, Phe and, less efficiently, Met from aminoacyl-tRNAs to the N-termini of proteins containing an N-terminal arginine or lysine. The sequence is that of Leucyl/phenylalanyl-tRNA--protein transferase from Shewanella sediminis (strain HAW-EB3).